A 578-amino-acid polypeptide reads, in one-letter code: Isocitrate dehydrogenase kinase/phosphatase (578 aa).

Residues 315 to 321 (APGIRGM) and lysine 336 contribute to the ATP site. The active site involves aspartate 371.

It belongs to the AceK family.

The protein localises to the cytoplasm. It carries out the reaction L-seryl-[isocitrate dehydrogenase] + ATP = O-phospho-L-seryl-[isocitrate dehydrogenase] + ADP + H(+). In terms of biological role, bifunctional enzyme which can phosphorylate or dephosphorylate isocitrate dehydrogenase (IDH) on a specific serine residue. This is a regulatory mechanism which enables bacteria to bypass the Krebs cycle via the glyoxylate shunt in response to the source of carbon. When bacteria are grown on glucose, IDH is fully active and unphosphorylated, but when grown on acetate or ethanol, the activity of IDH declines drastically concomitant with its phosphorylation. This is Isocitrate dehydrogenase kinase/phosphatase from Escherichia coli O17:K52:H18 (strain UMN026 / ExPEC).